A 338-amino-acid chain; its full sequence is Ketoreductase azaE (338 aa).

Positions 41 and 166 each coordinate NADP(+).

It belongs to the NAD(P)-dependent epimerase/dehydratase family. Dihydroflavonol-4-reductase subfamily.

It functions in the pathway secondary metabolite biosynthesis. Functionally, ketoreductase; part of the gene cluster that mediates the biosynthesis of azaphilones, a class of fungal metabolites characterized by a highly oxygenated pyrano-quinone bicyclic core and exhibiting a broad range of bioactivities. In the first step, the non-reducing polyketide synthase azaA forms the hexaketide precursor from successive condensations of five malonyl-CoA units, presumably with a simple acetyl-CoA starter unit. The reactive polyketide chain then undergoes a PT-mediated C2-C7 cyclization to afford the aromatic ring and is eventually released as an aldehyde through the R-domain. The putative ketoreductase azaE is proposed to catalyze the reduction of the terminal ketone resulting in the early culture product FK17-P2a. The monooxygenase azaH was demonstrated to be the only enzyme required to convert FK17-P2a to azanigerone E. AzaH first hydroxylates the benzaldehyde intermediate FK17-P2a at C4, which triggers the formation of the pyran-ring to afford azanigerone E. In parallel, the 2,4-dimethylhexanoyl chain is synthesized by the HR-PKS azaB and is proposed to be transferred to the C4-hydroxyl of azanigerone E by the acyltransferase azaD directly from the ACP domain of azaB. Alternatively, the 2,4-dimethyl-hexanoyl chain may be offloaded from the HR-PKS as a carboxylic acid and converted to an acyl-CoA by azaF. The resulting acyl-CoA molecule could then be taken up as a substrate by AzaD to form azanigerone B. To yield the carboxylic acid substituent in azanigerone A, the hydroxypropyl side chain of azanigerone B would need to undergo a C-C oxidative cleavage catalyzed by cytochrome P450 AzaI. AzaI is proposed to act on a vicinal diol that leads to a C-C bond scission either through an alkoxyradical intermediate or a peroxy complex. In the biosynthesis of azanigerone A, azanigerone B first undergoes hydroxylation at C10, possibly catalyzed by one of the two FAD-dependent monooxygenases encoded in the cluster, azaG or azaL, resulting in the vicinal diol azanigerone C. Oxidative cleavage of azanigerone C by azaI would yield the corresponding aldehyde derivative of azanigerone A. Finally, the dehydrogenase azaJ is proposed to convert the aldehyde functional group into the carboxylic acid, completing the conversion from azanigerone B to azanigerone A. Alternatively, the oxidation of aldehyde to carboxylic acid may be catalyzed by the same P450 enzyme azaI via consecutive oxidation or by endogenous alcohol dehydrogenase. This is Ketoreductase azaE from Aspergillus niger (strain ATCC 1015 / CBS 113.46 / FGSC A1144 / LSHB Ac4 / NCTC 3858a / NRRL 328 / USDA 3528.7).